A 246-amino-acid polypeptide reads, in one-letter code: Bis(5'-nucleosyl)-tetraphosphatase PrpE [asymmetrical] (246 aa).

It belongs to the PrpE family. Ni(2+) is required as a cofactor.

It catalyses the reaction P(1),P(4)-bis(5'-guanosyl) tetraphosphate + H2O = GMP + GTP + 2 H(+). Asymmetrically hydrolyzes Ap4p to yield AMP and ATP. The sequence is that of Bis(5'-nucleosyl)-tetraphosphatase PrpE [asymmetrical] from Bacillus cereus (strain ATCC 10987 / NRS 248).